The following is a 46-amino-acid chain: Large ribosomal subunit protein bL36B (46 aa).

Belongs to the bacterial ribosomal protein bL36 family.

This chain is Large ribosomal subunit protein bL36B, found in Enterobacter sp. (strain 638).